Here is a 141-residue protein sequence, read N- to C-terminus: Hemoglobin subunit alpha-D (141 aa).

The Globin domain occupies 1–141 (MLTADDKKLI…VAAVLAEKYR (141 aa)). Heme b-binding residues include H58 and H87.

It belongs to the globin family. In terms of assembly, heterotetramer of two alpha-D chains and two beta chains. Red blood cells.

Its function is as follows. Involved in oxygen transport from the lung to the various peripheral tissues. This is Hemoglobin subunit alpha-D (HBAD) from Aegypius monachus (Cinereous vulture).